Here is a 444-residue protein sequence, read N- to C-terminus: Zinc finger protein ZIC 1 (444 aa).

The C2H2-type 1 zinc-finger motif lies at 222-257 (LICKWIEPEQLANPKKSCNKTFSTMHELVTHVTVEH). The segment at 271–293 (EECPREGKPFKAKYKLVNHIRVH) adopts a C2H2-type 2; degenerate zinc-finger fold. C2H2-type zinc fingers lie at residues 299–323 (FPCPFPGCGKVFARSENLKIHKRTH), 329–353 (FKCEFEGCDRRFANSSDRKKHMHVH), and 359–381 (YLCKMCDKSYTHPSSLRKHMKVH). The interval 372–432 (SSLRKHMKVH…SSAGHHTASH (61 aa)) is disordered. Positions 383–432 (SSSQGSQPSPAASSGYESSTPPTIVSPSTENQTASSLSPSSSAGHHTASH) are enriched in low complexity.

The protein belongs to the GLI C2H2-type zinc-finger protein family.

It localises to the nucleus. Its subcellular location is the cytoplasm. In terms of biological role, acts as a transcriptional activator. Involved in neurogenesis. Plays important roles in the early stage of organogenesis of the CNS, as well as during dorsal spinal cord development and maturation of the cerebellum. Binds to the minimal GLI-consensus sequence 5'-TGGGTGGTC-3'. The sequence is that of Zinc finger protein ZIC 1 (ZIC1) from Gallus gallus (Chicken).